The chain runs to 276 residues: NH(3)-dependent NAD(+) synthetase (276 aa).

Gly-43–Ser-50 contributes to the ATP binding site. Residue Asp-49 participates in Mg(2+) binding. Arg-146 provides a ligand contact to deamido-NAD(+). Thr-166 contacts ATP. Glu-171 provides a ligand contact to Mg(2+). Residues Lys-179 and Asp-186 each contribute to the deamido-NAD(+) site. ATP is bound by residues Lys-195 and Thr-217. His-266 to Lys-267 lines the deamido-NAD(+) pocket.

This sequence belongs to the NAD synthetase family. Homodimer.

It carries out the reaction deamido-NAD(+) + NH4(+) + ATP = AMP + diphosphate + NAD(+) + H(+). It functions in the pathway cofactor biosynthesis; NAD(+) biosynthesis; NAD(+) from deamido-NAD(+) (ammonia route): step 1/1. Its function is as follows. Catalyzes the ATP-dependent amidation of deamido-NAD to form NAD. Uses ammonia as a nitrogen source. The chain is NH(3)-dependent NAD(+) synthetase from Shewanella amazonensis (strain ATCC BAA-1098 / SB2B).